The chain runs to 251 residues: tRNA pseudouridine synthase A (251 aa).

Catalysis depends on Asp56, which acts as the Nucleophile. Tyr110 provides a ligand contact to substrate.

Belongs to the tRNA pseudouridine synthase TruA family.

The enzyme catalyses uridine(38/39/40) in tRNA = pseudouridine(38/39/40) in tRNA. Functionally, formation of pseudouridine at positions 38, 39 and 40 in the anticodon stem and loop of transfer RNAs. The chain is tRNA pseudouridine synthase A from Picrophilus torridus (strain ATCC 700027 / DSM 9790 / JCM 10055 / NBRC 100828 / KAW 2/3).